A 213-amino-acid chain; its full sequence is MITRLGLIDYGMGNLRSVQIAFERLHKALHIVRQPADLSRCDALILPGVGAFDPAMVHLEQTRLVPDLKSWVKGGRPLLGICLGLQLLFESSDEGNATGLGLLKGHVQRLPSNQGERIPHMGWAALEHRNDCPLLDKEDPDSWMYFVHSYAAVPSQNSDLAAIAPFGRDNITAMVWKGRLGACQFHPEKSAAAGERMLRRWLNWLETGAKPVP.

Residues 4–211 (RLGLIDYGMG…LNWLETGAKP (208 aa)) form the Glutamine amidotransferase type-1 domain. C82 (nucleophile) is an active-site residue. Residues H186 and E188 contribute to the active site.

As to quaternary structure, heterodimer of HisH and HisF.

The protein localises to the cytoplasm. It carries out the reaction 5-[(5-phospho-1-deoxy-D-ribulos-1-ylimino)methylamino]-1-(5-phospho-beta-D-ribosyl)imidazole-4-carboxamide + L-glutamine = D-erythro-1-(imidazol-4-yl)glycerol 3-phosphate + 5-amino-1-(5-phospho-beta-D-ribosyl)imidazole-4-carboxamide + L-glutamate + H(+). The catalysed reaction is L-glutamine + H2O = L-glutamate + NH4(+). It functions in the pathway amino-acid biosynthesis; L-histidine biosynthesis; L-histidine from 5-phospho-alpha-D-ribose 1-diphosphate: step 5/9. Functionally, IGPS catalyzes the conversion of PRFAR and glutamine to IGP, AICAR and glutamate. The HisH subunit provides the glutamine amidotransferase activity that produces the ammonia necessary to HisF for the synthesis of IGP and AICAR. This Prochlorococcus marinus (strain MIT 9313) protein is Imidazole glycerol phosphate synthase subunit HisH 2 (hisH2).